Here is a 318-residue protein sequence, read N- to C-terminus: Bifunctional protein FolD 3 (318 aa).

NADP(+)-binding positions include 173 to 175 (GRS) and Ile242.

This sequence belongs to the tetrahydrofolate dehydrogenase/cyclohydrolase family. As to quaternary structure, homodimer.

It carries out the reaction (6R)-5,10-methylene-5,6,7,8-tetrahydrofolate + NADP(+) = (6R)-5,10-methenyltetrahydrofolate + NADPH. The catalysed reaction is (6R)-5,10-methenyltetrahydrofolate + H2O = (6R)-10-formyltetrahydrofolate + H(+). The protein operates within one-carbon metabolism; tetrahydrofolate interconversion. Functionally, catalyzes the oxidation of 5,10-methylenetetrahydrofolate to 5,10-methenyltetrahydrofolate and then the hydrolysis of 5,10-methenyltetrahydrofolate to 10-formyltetrahydrofolate. The sequence is that of Bifunctional protein FolD 3 from Rubrobacter xylanophilus (strain DSM 9941 / JCM 11954 / NBRC 16129 / PRD-1).